The following is a 385-amino-acid chain: Multidrug export protein AcrE (385 aa).

A signal peptide spans 1–23 (MTKHARFFLLPSFILISAALIAG). C24 carries the N-palmitoyl cysteine lipid modification. Residue C24 is the site of S-diacylglycerol cysteine attachment. Positions 366 to 385 (ARPGEQVKATTDTPADTASK) are disordered. The span at 373 to 385 (KATTDTPADTASK) shows a compositional bias: polar residues.

Belongs to the membrane fusion protein (MFP) (TC 8.A.1) family. Part of the tripartite efflux system AcrEF-TolC, which is composed of an inner membrane transporter, AcrF, a periplasmic membrane fusion protein, AcrE, and an outer membrane component, TolC. The complex forms a large protein conduit and can translocate molecules across both the inner and outer membranes.

It is found in the cell inner membrane. Its function is as follows. Part of the tripartite efflux system AcrEF-TolC. Involved in the efflux of indole and organic solvents. The chain is Multidrug export protein AcrE (acrE) from Escherichia coli (strain K12).